The sequence spans 109 residues: uncharacterized protein (109 aa).

This is an uncharacterized protein from Enterobacteria phage T4 (Bacteriophage T4).